Consider the following 84-residue polypeptide: UPF0457 protein BC_3525 (84 aa).

Belongs to the UPF0457 family.

The polypeptide is UPF0457 protein BC_3525 (Bacillus cereus (strain ATCC 14579 / DSM 31 / CCUG 7414 / JCM 2152 / NBRC 15305 / NCIMB 9373 / NCTC 2599 / NRRL B-3711)).